The chain runs to 396 residues: Capsular polysaccharide biosynthesis protein CapF (396 aa).

12 helical membrane passes run 7 to 27, 41 to 61, 74 to 94, 101 to 121, 129 to 149, 153 to 173, 198 to 218, 232 to 252, 279 to 299, 315 to 335, 351 to 371, and 372 to 392; these read YMFVANILSALCKFLILLVIV, ALVITAPIFLFISLKIRSVIV, AILSLNIITLIFVAIFVYVLG, ILIVSLIKLFENIKEVPYGIY, LLGISMGIYNILSLILFYIIY, HNLNMALLFLVISCIFSFAII, IFILTIPLAFSSALGSLNTGI, LGIFSTIAYVLVIGGLFANSI, MVFIGIFIGMCSVILSLFLGE, IILIILSFGLLFILSGIFLGT, LILLFCILIFSFLLIPKYSLL, and GAALTITISQFVALISYYYFY.

This sequence belongs to the polysaccharide synthase family.

The protein localises to the cell membrane. It participates in capsule biogenesis; capsule polysaccharide biosynthesis. Functionally, required for the biosynthesis of type 1 capsular polysaccharide. The protein is Capsular polysaccharide biosynthesis protein CapF (capF) of Staphylococcus aureus.